The following is a 411-amino-acid chain: MNALAATNRNFKLASRLLGLDSKLEKSLLIPFREIKVECTIPKDDGTLASFVGFRVQHDNARGPMKGGIRYHPEVEPDEVNALAQLMTWKTAVAKIPYGGAKGGIGCDPSELSLSELERLTRVFTQKIHDLIGIHTDVPAPDMGTGPQTMAWILDEYSKFHGHSPAVVTGKPIDLGGSLGRDAATGRGVLFATEALLNEHGKTISGQRFAIQGFGNVGSWAAKLISDKGGKIVAVSDVTGAIKNNNGIDILSLLEHAEENRGIKGFDGADSIDPDSILVEDCDILVPAALGGVINRENANEIKAKFIIEGANHPTDPEADEILKKKGVMILPDIYANSGGVTVSYFEWVQNIQGFMWDEEKVNRELKTYMTRGFKDLKEMCQTHSCDLRMGAFTLGINRVAQATTIRGWGS.

Lys102 is an active-site residue.

Belongs to the Glu/Leu/Phe/Val dehydrogenases family.

It catalyses the reaction L-glutamate + NAD(+) + H2O = 2-oxoglutarate + NH4(+) + NADH + H(+). It carries out the reaction L-glutamate + NADP(+) + H2O = 2-oxoglutarate + NH4(+) + NADPH + H(+). The protein is Probable glutamate dehydrogenase 3 (GSH3) of Arabidopsis thaliana (Mouse-ear cress).